We begin with the raw amino-acid sequence, 398 residues long: Alpha-2,8-sialyltransferase 8F (398 aa).

Residues 1–3 (MRP) lie on the Cytoplasmic side of the membrane. Residues 4 to 24 (GGALLALLASLLLLLLLRLLW) form a helical; Signal-anchor for type II membrane protein membrane-spanning segment. The Lumenal segment spans residues 25 to 398 (CPADAPGRAR…KLQFSKCEVA (374 aa)). N-linked (GlcNAc...) asparagine glycosylation is found at N66, N93, N151, and N196. Disulfide bonds link C186–C335 and C200–C395. Residues N214, 236–238 (NPS), and 322–324 (STG) contribute to the substrate site. The Proton donor/acceptor role is filled by H370.

The protein belongs to the glycosyltransferase 29 family.

It localises to the golgi apparatus membrane. It catalyses the reaction a ganglioside GM3 + CMP-N-acetyl-beta-neuraminate = a ganglioside GD3 + CMP + H(+). It carries out the reaction a ganglioside GM3 (d18:1(4E)) + CMP-N-acetyl-beta-neuraminate = a ganglioside GD3 (d18:1(4E)) + CMP + H(+). The catalysed reaction is a ganglioside GD1a (d18:1(4E)) + CMP-N-acetyl-beta-neuraminate = a ganglioside GT1a (d18:1(4E)) + CMP + H(+). The enzyme catalyses a ganglioside GD1a + CMP-N-acetyl-beta-neuraminate = a ganglioside GT1a + CMP + H(+). It catalyses the reaction a ganglioside GM1b (d18:1(4E)) + CMP-N-acetyl-beta-neuraminate = a ganglioside GD1c (d18:1(4E)) + CMP + H(+). It carries out the reaction a ganglioside GM1b + CMP-N-acetyl-beta-neuraminate = a ganglioside GD1c + CMP + H(+). The catalysed reaction is a ganglioside GM4 (d18:1(4E)) + CMP-N-acetyl-beta-neuraminate = an N-acetyl-alpha-neuraminosyl-(2-&gt;8)-N-acetyl-alpha-neuraminosyl-(2-&gt;3)-beta-D-galactosyl-(1&lt;-&gt;1')-N-acylsphing-4-enine + CMP + H(+). The enzyme catalyses N-acetyl-alpha-neuraminosyl-(2-&gt;3)-beta-D-galactosyl-(1&lt;-&gt;1')-ceramide + CMP-N-acetyl-beta-neuraminate = N-acetyl-alpha-neuraminosyl-(2-&gt;8)-N-acetyl-alpha-neuraminosyl-(2-&gt;3)-beta-D-galactosyl-(1&lt;-&gt;1')-ceramide + CMP + H(+). It catalyses the reaction a ganglioside GT1b (d18:1(4E)) + CMP-N-acetyl-beta-neuraminate = a ganglioside GQ1b (d18:1(4E)) + CMP + H(+). It carries out the reaction a ganglioside GT1b + CMP-N-acetyl-beta-neuraminate = a ganglioside GQ1b + CMP + H(+). It functions in the pathway protein modification; protein glycosylation. Its function is as follows. Alpha-2,8-sialyltransferase that prefers O-glycans to N-glycans or glycolipids as acceptor substrates. The minimal acceptor substrate is the NeuAc-alpha-2,3(6)-Gal sequence at the non-reducing end of their carbohydrate groups. This is Alpha-2,8-sialyltransferase 8F (ST8SIA6) from Pan troglodytes (Chimpanzee).